The following is a 505-amino-acid chain: Betaine aldehyde dehydrogenase (505 aa).

239–244 contributes to the NAD(+) binding site; it reads GSTATG. The active-site Proton acceptor is the Glu261. The active-site Nucleophile is Cys296. Positions 503 to 505 match the Microbody targeting signal motif; it reads SKL.

This sequence belongs to the aldehyde dehydrogenase family. In terms of assembly, homodimer.

The protein resides in the peroxisome. It catalyses the reaction betaine aldehyde + NAD(+) + H2O = glycine betaine + NADH + 2 H(+). It participates in amine and polyamine biosynthesis; betaine biosynthesis via choline pathway; betaine from betaine aldehyde: step 1/1. The protein is Betaine aldehyde dehydrogenase of Hordeum vulgare (Barley).